Reading from the N-terminus, the 230-residue chain is MSERAPVVTIDGPSGAGKGTISQLLAQHLGWQLLDSGAIYRVLALAAIHHNVELENEESITLLAAHLDVKFLTGNDTDPVQVILEGEDVTTDIRTQECSNAASKVAAFPRVREALLRRQRAFKTAPGLIADGRDMGTVVFPSAPAKLYLTASAEERAQRRYNQLQDKGFDVNIERLLSEIIERDDRDMNRPVAPLVPAEDALIIDTSGKGIDEVLALALNFINQKLSDTN.

ATP is bound at residue 12–20; sequence GPSGAGKGT.

It belongs to the cytidylate kinase family. Type 1 subfamily.

Its subcellular location is the cytoplasm. The catalysed reaction is CMP + ATP = CDP + ADP. It carries out the reaction dCMP + ATP = dCDP + ADP. This Shewanella baltica (strain OS223) protein is Cytidylate kinase.